Here is a 204-residue protein sequence, read N- to C-terminus: Peptide deformylase (204 aa).

Residues Cys-131 and His-174 each contribute to the Fe cation site. Glu-175 is a catalytic residue. His-178 is a binding site for Fe cation.

It belongs to the polypeptide deformylase family. Requires Fe(2+) as cofactor.

It carries out the reaction N-terminal N-formyl-L-methionyl-[peptide] + H2O = N-terminal L-methionyl-[peptide] + formate. Functionally, removes the formyl group from the N-terminal Met of newly synthesized proteins. Requires at least a dipeptide for an efficient rate of reaction. N-terminal L-methionine is a prerequisite for activity but the enzyme has broad specificity at other positions. In Streptococcus agalactiae serotype III (strain NEM316), this protein is Peptide deformylase.